Reading from the N-terminus, the 322-residue chain is Retinal homeobox protein Rx-A (322 aa).

An Octapeptide motif motif is present at residues 32–39; it reads HSIEAILG. A compositionally biased stretch (basic and acidic residues) spans 75–87; that stretch reads TEEIHPQQEHLED. The interval 75–136 is disordered; sequence TEEIHPQQEH…KKKHRRNRTT (62 aa). The span at 100-117 shows a compositional bias: polar residues; it reads KTSSECLSPGLSTSNSDN. The homeobox DNA-binding region spans 130 to 189; the sequence is HRRNRTTFTTYQLHELERAFEKSHYPDVYSREELAMKVNLPEVRVQVWFQNRRAKWRRQE. The short motif at 302 to 315 is the OAR element; the sequence is NSIASLRMKAKEHI. A Nuclear localization signal motif is present at residues 308 to 312; sequence RMKAK.

Belongs to the paired homeobox family. Bicoid subfamily. In terms of tissue distribution, highly expressed in anterior neural plate followed by neural retina, pigmented epithelium, in pineal gland, diencephalon floor and epiphysis. At later stages, the neuroretina remains the primary site of expression. No expression in the developing lens and cornea.

Its subcellular location is the nucleus. In terms of biological role, plays a critical role in eye formation by regulating the initial specification of retinal cells and/or their subsequent proliferation. The protein is Retinal homeobox protein Rx-A (rax-a) of Xenopus laevis (African clawed frog).